We begin with the raw amino-acid sequence, 664 residues long: Phosphomethylpyrimidine synthase (664 aa).

Residues Asn-235, Met-264, Tyr-293, His-329, Ser-349 to Gly-351, Asp-390 to Arg-393, and Glu-429 each bind substrate. His-433 provides a ligand contact to Zn(2+). Residue Tyr-456 participates in substrate binding. Position 497 (His-497) interacts with Zn(2+). The [4Fe-4S] cluster site is built by Cys-577, Cys-580, and Cys-585.

It belongs to the ThiC family. In terms of assembly, homodimer. Requires [4Fe-4S] cluster as cofactor.

It carries out the reaction 5-amino-1-(5-phospho-beta-D-ribosyl)imidazole + S-adenosyl-L-methionine = 4-amino-2-methyl-5-(phosphooxymethyl)pyrimidine + CO + 5'-deoxyadenosine + formate + L-methionine + 3 H(+). Its pathway is cofactor biosynthesis; thiamine diphosphate biosynthesis. Functionally, catalyzes the synthesis of the hydroxymethylpyrimidine phosphate (HMP-P) moiety of thiamine from aminoimidazole ribotide (AIR) in a radical S-adenosyl-L-methionine (SAM)-dependent reaction. The sequence is that of Phosphomethylpyrimidine synthase from Shewanella amazonensis (strain ATCC BAA-1098 / SB2B).